We begin with the raw amino-acid sequence, 183 residues long: Probable chemoreceptor glutamine deamidase CheD (183 aa).

It belongs to the CheD family.

It carries out the reaction L-glutaminyl-[protein] + H2O = L-glutamyl-[protein] + NH4(+). Its function is as follows. Probably deamidates glutamine residues to glutamate on methyl-accepting chemotaxis receptors (MCPs), playing an important role in chemotaxis. This chain is Probable chemoreceptor glutamine deamidase CheD, found in Zymomonas mobilis subsp. mobilis (strain ATCC 31821 / ZM4 / CP4).